Consider the following 371-residue polypeptide: Anhydro-N-acetylmuramic acid kinase (371 aa).

ATP is bound at residue 15–22 (GTSLDGVD).

Belongs to the anhydro-N-acetylmuramic acid kinase family.

It catalyses the reaction 1,6-anhydro-N-acetyl-beta-muramate + ATP + H2O = N-acetyl-D-muramate 6-phosphate + ADP + H(+). Its pathway is amino-sugar metabolism; 1,6-anhydro-N-acetylmuramate degradation. It functions in the pathway cell wall biogenesis; peptidoglycan recycling. Catalyzes the specific phosphorylation of 1,6-anhydro-N-acetylmuramic acid (anhMurNAc) with the simultaneous cleavage of the 1,6-anhydro ring, generating MurNAc-6-P. Is required for the utilization of anhMurNAc either imported from the medium or derived from its own cell wall murein, and thus plays a role in cell wall recycling. The polypeptide is Anhydro-N-acetylmuramic acid kinase (Cereibacter sphaeroides (strain ATCC 17023 / DSM 158 / JCM 6121 / CCUG 31486 / LMG 2827 / NBRC 12203 / NCIMB 8253 / ATH 2.4.1.) (Rhodobacter sphaeroides)).